The chain runs to 131 residues: MCMTDPIADMLTRIRNAQAAEKKEVKIPSSKLKKAILKILKDEGYIESYQEIVSDGKLSVDICLKYFNGGPVISSLTRISKPGLRRYSSRNNLPKVMHGLGIAIVSTSKGVMTERSARAGGVGGELLCIVA.

This sequence belongs to the universal ribosomal protein uS8 family. In terms of assembly, part of the 30S ribosomal subunit. Contacts proteins S5 and S12.

Functionally, one of the primary rRNA binding proteins, it binds directly to 16S rRNA central domain where it helps coordinate assembly of the platform of the 30S subunit. The protein is Small ribosomal subunit protein uS8 of Nitrosomonas eutropha (strain DSM 101675 / C91 / Nm57).